Reading from the N-terminus, the 232-residue chain is Fibrillarin-like rRNA/tRNA 2'-O-methyltransferase (232 aa).

S-adenosyl-L-methionine contacts are provided by residues 89–90 (TT), 108–109 (EF), 133–134 (DA), and 153–156 (DIAQ).

The protein belongs to the methyltransferase superfamily. Fibrillarin family. Interacts with nop5. Component of box C/D small ribonucleoprotein (sRNP) particles that contain rpl7ae, FlpA and nop5, plus a guide RNA.

Involved in pre-rRNA and tRNA processing. Utilizes the methyl donor S-adenosyl-L-methionine to catalyze the site-specific 2'-hydroxyl methylation of ribose moieties in rRNA and tRNA. Site specificity is provided by a guide RNA that base pairs with the substrate. Methylation occurs at a characteristic distance from the sequence involved in base pairing with the guide RNA. This chain is Fibrillarin-like rRNA/tRNA 2'-O-methyltransferase, found in Saccharolobus islandicus (strain L.S.2.15 / Lassen #1) (Sulfolobus islandicus).